A 353-amino-acid polypeptide reads, in one-letter code: Photosystem II protein D1 (353 aa).

N-acetylthreonine is present on threonine 2. Phosphothreonine is present on threonine 2. Helical transmembrane passes span 29 to 46 (YIGW…TATS), 118 to 133 (HFLL…EWEL), and 142 to 156 (WIAV…AATA). Chlorophyll a is bound at residue histidine 118. Tyrosine 126 contributes to the pheophytin a binding site. Residues aspartate 170 and glutamate 189 each coordinate [CaMn4O5] cluster. The chain crosses the membrane as a helical span at residues 197–218 (FHMLGVAGVFGGSLFSAMHGSL). Histidine 198 is a chlorophyll a binding site. Residues histidine 215 and 264–265 (SF) contribute to the a quinone site. Histidine 215 contacts Fe cation. Histidine 272 serves as a coordination point for Fe cation. Residues 274–288 (FLAAWPVVGIWFTAL) form a helical membrane-spanning segment. [CaMn4O5] cluster-binding residues include histidine 332, glutamate 333, aspartate 342, and alanine 344. A propeptide spanning residues 345–353 (AVEAPAVNG) is cleaved from the precursor.

This sequence belongs to the reaction center PufL/M/PsbA/D family. PSII is composed of 1 copy each of membrane proteins PsbA, PsbB, PsbC, PsbD, PsbE, PsbF, PsbH, PsbI, PsbJ, PsbK, PsbL, PsbM, PsbT, PsbX, PsbY, PsbZ, Psb30/Ycf12, at least 3 peripheral proteins of the oxygen-evolving complex and a large number of cofactors. It forms dimeric complexes. The D1/D2 heterodimer binds P680, chlorophylls that are the primary electron donor of PSII, and subsequent electron acceptors. It shares a non-heme iron and each subunit binds pheophytin, quinone, additional chlorophylls, carotenoids and lipids. D1 provides most of the ligands for the Mn4-Ca-O5 cluster of the oxygen-evolving complex (OEC). There is also a Cl(-1) ion associated with D1 and D2, which is required for oxygen evolution. The PSII complex binds additional chlorophylls, carotenoids and specific lipids. serves as cofactor. In terms of processing, tyr-161 forms a radical intermediate that is referred to as redox-active TyrZ, YZ or Y-Z. C-terminally processed by CTPA; processing is essential to allow assembly of the oxygen-evolving complex and thus photosynthetic growth.

The protein resides in the plastid. Its subcellular location is the chloroplast thylakoid membrane. The catalysed reaction is 2 a plastoquinone + 4 hnu + 2 H2O = 2 a plastoquinol + O2. Its function is as follows. Photosystem II (PSII) is a light-driven water:plastoquinone oxidoreductase that uses light energy to abstract electrons from H(2)O, generating O(2) and a proton gradient subsequently used for ATP formation. It consists of a core antenna complex that captures photons, and an electron transfer chain that converts photonic excitation into a charge separation. The D1/D2 (PsbA/PsbD) reaction center heterodimer binds P680, the primary electron donor of PSII as well as several subsequent electron acceptors. The protein is Photosystem II protein D1 of Marchantia polymorpha (Common liverwort).